The chain runs to 180 residues: NADH-quinone oxidoreductase subunit I (180 aa).

2 consecutive 4Fe-4S ferredoxin-type domains span residues 50 to 80 and 90 to 119; these read LTRD…LQKA and EFFR…LTPD. [4Fe-4S] cluster contacts are provided by Cys60, Cys63, Cys66, Cys70, Cys99, Cys102, Cys105, and Cys109.

The protein belongs to the complex I 23 kDa subunit family. In terms of assembly, NDH-1 is composed of 13 different subunits. Subunits NuoA, H, J, K, L, M, N constitute the membrane sector of the complex. [4Fe-4S] cluster serves as cofactor.

The protein localises to the cell inner membrane. It carries out the reaction a quinone + NADH + 5 H(+)(in) = a quinol + NAD(+) + 4 H(+)(out). In terms of biological role, NDH-1 shuttles electrons from NADH, via FMN and iron-sulfur (Fe-S) centers, to quinones in the respiratory chain. The immediate electron acceptor for the enzyme in this species is believed to be ubiquinone. Couples the redox reaction to proton translocation (for every two electrons transferred, four hydrogen ions are translocated across the cytoplasmic membrane), and thus conserves the redox energy in a proton gradient. The chain is NADH-quinone oxidoreductase subunit I from Shigella boydii serotype 4 (strain Sb227).